We begin with the raw amino-acid sequence, 60 residues long: Lantibiotic Pep5 (60 aa).

Residues 1–26 (MKNNKNLFDLEIKKETSQNTDELEPQ) constitute a propeptide that is removed on maturation. The tract at residues 1–29 (MKNNKNLFDLEIKKETSQNTDELEPQTAG) is disordered. T27 bears the 2-oxobutanoic acid mark. Positions 35 to 39 (SVKQC) form a cross-link, lanthionine (Ser-Cys). A 2,3-didehydrobutyrine mark is found at T42 and T46. Positions 50 to 53 (TVSC) form a cross-link, beta-methyllanthionine (Thr-Cys). Positions 52–59 (SCKGKNGC) form a cross-link, lanthionine (Ser-Cys).

Belongs to the type A lantibiotic family. Post-translationally, maturation of lantibiotics involves the enzymatic conversion of Thr, and Ser into dehydrated AA and the formation of thioether bonds with cysteine. This is followed by membrane translocation and cleavage of the modified precursor. In terms of processing, after proteolysis of the propeptide, the N-terminal 2,3-didehydrobutyrine hydrolyzes to 2-oxobutanoic acid, possibly spontaneously.

Lanthionine-containing peptide antibiotic (lantibiotic) active on Gram-positive bacteria. The bactericidal activity of lantibiotics is based on depolarization of energized bacterial cytoplasmic membranes, initiated by the formation of aqueous transmembrane pores. The polypeptide is Lantibiotic Pep5 (pepA) (Staphylococcus epidermidis).